Here is a 200-residue protein sequence, read N- to C-terminus: Recombination protein RecR (200 aa).

Residues 59–74 (CEKCNTFTEAQVCEVC) form a C4-type zinc finger. The region spanning 82 to 177 (ALLCVVETPA…AVTRLARGVP (96 aa)) is the Toprim domain.

Belongs to the RecR family.

Functionally, may play a role in DNA repair. It seems to be involved in an RecBC-independent recombinational process of DNA repair. It may act with RecF and RecO. The polypeptide is Recombination protein RecR (Burkholderia pseudomallei (strain 1106a)).